Here is a 197-residue protein sequence, read N- to C-terminus: Phosphoheptose isomerase (197 aa).

The SIS domain occupies 36 to 197; it reads MVNALLNEGK…IDSQLFGSEE (162 aa). Residue 51–53 coordinates substrate; that stretch reads NGG. Residues His60 and Glu64 each contribute to the Zn(2+) site. Substrate is bound by residues Glu64, 93–94, 119–121, Ser124, and Gln174; these read ND and STS. Residues Gln174 and His182 each coordinate Zn(2+).

The protein belongs to the SIS family. GmhA subfamily. Homotetramer. The cofactor is Zn(2+).

The protein resides in the cytoplasm. The catalysed reaction is 2 D-sedoheptulose 7-phosphate = D-glycero-alpha-D-manno-heptose 7-phosphate + D-glycero-beta-D-manno-heptose 7-phosphate. The protein operates within carbohydrate biosynthesis; D-glycero-D-manno-heptose 7-phosphate biosynthesis; D-glycero-alpha-D-manno-heptose 7-phosphate and D-glycero-beta-D-manno-heptose 7-phosphate from sedoheptulose 7-phosphate: step 1/1. Functionally, catalyzes the isomerization of sedoheptulose 7-phosphate in D-glycero-D-manno-heptose 7-phosphate. The protein is Phosphoheptose isomerase of Pseudomonas syringae pv. syringae (strain B728a).